The sequence spans 529 residues: Peptide chain release factor 3 (529 aa).

Residues 11-280 enclose the tr-type G domain; sequence AKRRTFAIIS…GLVEWAPAPM (270 aa). Residues 20-27, 88-92, and 142-145 contribute to the GTP site; these read SHPDAGKT, DTPGH, and NKLD.

The protein belongs to the TRAFAC class translation factor GTPase superfamily. Classic translation factor GTPase family. PrfC subfamily.

The protein resides in the cytoplasm. Increases the formation of ribosomal termination complexes and stimulates activities of RF-1 and RF-2. It binds guanine nucleotides and has strong preference for UGA stop codons. It may interact directly with the ribosome. The stimulation of RF-1 and RF-2 is significantly reduced by GTP and GDP, but not by GMP. The protein is Peptide chain release factor 3 of Shigella flexneri.